The chain runs to 424 residues: Cyclin-dependent kinase D-1 (424 aa).

The Protein kinase domain maps to 19–299 (YLKREVLGEG…AQQALEHRYF (281 aa)). Residues 25–33 (LGEGTYGVV) and K48 contribute to the ATP site. At T29 the chain carries Phosphothreonine. Y30 is modified (phosphotyrosine). D141 acts as the Proton acceptor in catalysis. S168 carries the post-translational modification Phosphoserine. Phosphothreonine is present on T174. Disordered stretches follow at residues 303–337 (PAPT…PVVL) and 359–424 (ADRT…GYTE). Residues 359–374 (ADRTEEHPSGARHMDD) show a composition bias toward basic and acidic residues.

Belongs to the protein kinase superfamily. CMGC Ser/Thr protein kinase family. CDC2/CDKX subfamily.

It is found in the nucleus. It catalyses the reaction L-seryl-[protein] + ATP = O-phospho-L-seryl-[protein] + ADP + H(+). The enzyme catalyses L-threonyl-[protein] + ATP = O-phospho-L-threonyl-[protein] + ADP + H(+). It carries out the reaction [DNA-directed RNA polymerase] + ATP = phospho-[DNA-directed RNA polymerase] + ADP + H(+). This Oryza sativa subsp. indica (Rice) protein is Cyclin-dependent kinase D-1 (CDKD-1).